A 370-amino-acid chain; its full sequence is MSKQWASGTNGAFKRQVSSFRETISKQHPIYKPAKGRYWLYVSLACPWAHRTLITRALKGLTSVIGCSVVHWHLDEKGWRFLDMEKQLEDSEDFLEHWHDVAGGIRTAKEDSSKSFAEIKNDSQRFMVDATNEPHYGYKRISDLYYKSDPQYSARFTVPVLWDLETQTIVNNESSEIIRILNSSAFDEFVDDDHKKTDLVPAQLKTQIDDFNSWVYDSINNGVYKTGFAEKAEVYESEVNNVFEHLDKVEKILSDKYSKLKAKYGEEDRQKILGEFFTVGDQLTEADIRLYTTVIRFDPVYVQHFKCNFTSIRAGYPFIHLWVRNLYWNYDAFRYTTDFDHIKLHYTRSHTRINPLGITPLGPKPDIRPL.

A glutathione-binding site is contributed by Arg-15. Residue Cys-46 is the Nucleophile of the active site. The glutathione site is built by Trp-79, Arg-155, Val-158, Glu-173, and Ser-174. In terms of domain architecture, GST C-terminal spans Pro-201–Ile-353.

The protein belongs to the GST superfamily. Omega family. As to quaternary structure, homodimer.

It localises to the cytoplasm. The enzyme catalyses RX + glutathione = an S-substituted glutathione + a halide anion + H(+). It carries out the reaction L-dehydroascorbate + 2 glutathione = glutathione disulfide + L-ascorbate. Its function is as follows. Active as '1-Cys' thiol transferase against beta-hydroxyethyl disulfide (HED), as dehydroascorbate reductase and as dimethylarsinic acid reductase, while not active against the standard GST substrate 1-chloro-2,4-dinitrobenzene (CDNB). May be involved in cell wall organization and biogenesis. This chain is Glutathione S-transferase omega-like 2, found in Saccharomyces cerevisiae (strain ATCC 204508 / S288c) (Baker's yeast).